The sequence spans 159 residues: Putative ribosomal RNA large subunit methyltransferase H (159 aa).

S-adenosyl-L-methionine contacts are provided by residues Leu76, Gly108, and 127-132 (LSPLTF).

This sequence belongs to the RNA methyltransferase RlmH family.

The protein resides in the cytoplasm. The catalysed reaction is pseudouridine(1915) in 23S rRNA + S-adenosyl-L-methionine = N(3)-methylpseudouridine(1915) in 23S rRNA + S-adenosyl-L-homocysteine + H(+). Functionally, specifically methylates the pseudouridine at position 1915 (m3Psi1915) in 23S rRNA. The chain is Putative ribosomal RNA large subunit methyltransferase H from Methanoregula boonei (strain DSM 21154 / JCM 14090 / 6A8).